Reading from the N-terminus, the 145-residue chain is Holo-[acyl-carrier-protein] synthase (145 aa).

2 residues coordinate Mg(2+): D9 and E63.

The protein belongs to the P-Pant transferase superfamily. AcpS family. Mg(2+) is required as a cofactor.

It is found in the cytoplasm. It carries out the reaction apo-[ACP] + CoA = holo-[ACP] + adenosine 3',5'-bisphosphate + H(+). In terms of biological role, transfers the 4'-phosphopantetheine moiety from coenzyme A to a Ser of acyl-carrier-protein. This chain is Holo-[acyl-carrier-protein] synthase, found in Burkholderia vietnamiensis (strain G4 / LMG 22486) (Burkholderia cepacia (strain R1808)).